The following is a 206-amino-acid chain: N-(5'-phosphoribosyl)anthranilate isomerase (206 aa).

This sequence belongs to the TrpF family.

The enzyme catalyses N-(5-phospho-beta-D-ribosyl)anthranilate = 1-(2-carboxyphenylamino)-1-deoxy-D-ribulose 5-phosphate. The protein operates within amino-acid biosynthesis; L-tryptophan biosynthesis; L-tryptophan from chorismate: step 3/5. The chain is N-(5'-phosphoribosyl)anthranilate isomerase from Azotobacter vinelandii (strain DJ / ATCC BAA-1303).